A 142-amino-acid polypeptide reads, in one-letter code: Large ribosomal subunit protein uL11 (142 aa).

Belongs to the universal ribosomal protein uL11 family. As to quaternary structure, part of the ribosomal stalk of the 50S ribosomal subunit. Interacts with L10 and the large rRNA to form the base of the stalk. L10 forms an elongated spine to which L12 dimers bind in a sequential fashion forming a multimeric L10(L12)X complex. Post-translationally, one or more lysine residues are methylated.

Its function is as follows. Forms part of the ribosomal stalk which helps the ribosome interact with GTP-bound translation factors. The sequence is that of Large ribosomal subunit protein uL11 from Mycolicibacterium vanbaalenii (strain DSM 7251 / JCM 13017 / BCRC 16820 / KCTC 9966 / NRRL B-24157 / PYR-1) (Mycobacterium vanbaalenii).